The following is a 470-amino-acid chain: Ribosomal protein uS12 methylthiotransferase RimO (470 aa).

In terms of domain architecture, MTTase N-terminal spans P20–A131. Positions 29, 65, 94, 169, 173, and 176 each coordinate [4Fe-4S] cluster. The region spanning T155–A384 is the Radical SAM core domain. Residues A387–S458 form the TRAM domain.

It belongs to the methylthiotransferase family. RimO subfamily. It depends on [4Fe-4S] cluster as a cofactor.

It is found in the cytoplasm. The catalysed reaction is L-aspartate(89)-[ribosomal protein uS12]-hydrogen + (sulfur carrier)-SH + AH2 + 2 S-adenosyl-L-methionine = 3-methylsulfanyl-L-aspartate(89)-[ribosomal protein uS12]-hydrogen + (sulfur carrier)-H + 5'-deoxyadenosine + L-methionine + A + S-adenosyl-L-homocysteine + 2 H(+). Functionally, catalyzes the methylthiolation of an aspartic acid residue of ribosomal protein uS12. The protein is Ribosomal protein uS12 methylthiotransferase RimO of Synechococcus sp. (strain CC9311).